Here is a 727-residue protein sequence, read N- to C-terminus: NADH-ubiquinone oxidoreductase 75 kDa subunit, mitochondrial (727 aa).

A mitochondrion-targeting transit peptide spans methionine 1–threonine 23. In terms of domain architecture, 2Fe-2S ferredoxin-type spans asparagine 30 to lysine 108. [2Fe-2S] cluster-binding residues include cysteine 64, cysteine 75, and cysteine 78. At lysine 84 the chain carries N6-acetyllysine. Residue cysteine 92 coordinates [2Fe-2S] cluster. The 40-residue stretch at lysine 108–glycine 147 folds into the 4Fe-4S His(Cys)3-ligated-type domain. [4Fe-4S] cluster contacts are provided by histidine 124, cysteine 128, cysteine 131, cysteine 137, cysteine 176, cysteine 179, cysteine 182, and cysteine 226. Positions threonine 245–arginine 301 constitute a 4Fe-4S Mo/W bis-MGD-type domain. A Phosphoserine modification is found at serine 461. Lysine 467, lysine 499, and lysine 709 each carry N6-acetyllysine.

Belongs to the complex I 75 kDa subunit family. In terms of assembly, core subunit of respiratory chain NADH dehydrogenase (Complex I) which is composed of 45 different subunits. This is the largest subunit of complex I and it is a component of the iron-sulfur (IP) fragment of the enzyme. Complex I associates with ubiquinol-cytochrome reductase complex (Complex III) to form supercomplexes. In astrocytes, less complex I is assembled into supercomplexes as compared to neurons. Interacts with MDM2. Interacts with AKAP1. It depends on [2Fe-2S] cluster as a cofactor. [4Fe-4S] cluster serves as cofactor. In terms of processing, acetylation of Lys-84 is observed in liver mitochondria from fasted mice but not from fed mice. In terms of tissue distribution, brain. More abundant in neurons than in astrocytes (at protein level).

It localises to the mitochondrion inner membrane. It carries out the reaction a ubiquinone + NADH + 5 H(+)(in) = a ubiquinol + NAD(+) + 4 H(+)(out). In terms of biological role, core subunit of the mitochondrial membrane respiratory chain NADH dehydrogenase (Complex I) which catalyzes electron transfer from NADH through the respiratory chain, using ubiquinone as an electron acceptor. Essential for catalysing the entry and efficient transfer of electrons within complex I. Plays a key role in the assembly and stability of complex I and participates in the association of complex I with ubiquinol-cytochrome reductase complex (Complex III) to form supercomplexes. The polypeptide is NADH-ubiquinone oxidoreductase 75 kDa subunit, mitochondrial (Ndufs1) (Mus musculus (Mouse)).